The primary structure comprises 190 residues: Threonylcarbamoyl-AMP synthase (190 aa).

The 184-residue stretch at 7 to 190 (TGSIAAAVDL…ALTGELFRQG (184 aa)) folds into the YrdC-like domain.

Belongs to the SUA5 family. TsaC subfamily.

The protein localises to the cytoplasm. The catalysed reaction is L-threonine + hydrogencarbonate + ATP = L-threonylcarbamoyladenylate + diphosphate + H2O. Functionally, required for the formation of a threonylcarbamoyl group on adenosine at position 37 (t(6)A37) in tRNAs that read codons beginning with adenine. Catalyzes the conversion of L-threonine, HCO(3)(-)/CO(2) and ATP to give threonylcarbamoyl-AMP (TC-AMP) as the acyladenylate intermediate, with the release of diphosphate. This chain is Threonylcarbamoyl-AMP synthase, found in Salmonella arizonae (strain ATCC BAA-731 / CDC346-86 / RSK2980).